The chain runs to 304 residues: Lipid droplet-associated hydrolase (304 aa).

The active-site Nucleophile is Ser-119. Active-site charge relay system residues include Asp-250 and His-279.

It belongs to the AB hydrolase superfamily. LDAH family.

The protein localises to the lipid droplet. It catalyses the reaction a cholesterol ester + H2O = cholesterol + a fatty acid + H(+). Its function is as follows. Probable serine lipid hydrolase associated with lipid droplets. Has low cholesterol esterase activity. Appears to lack triglyceride lipase activity. Involved in cholesterol and triglyceride homeostasis; stimulates cellular triglyceride accumulation and cellular cholesterol release. The protein is Lipid droplet-associated hydrolase of Dictyostelium discoideum (Social amoeba).